The primary structure comprises 200 residues: UPF0329 protein ECU06_1670 (200 aa).

It belongs to the UPF0329 family.

The protein is UPF0329 protein ECU06_1670 of Encephalitozoon cuniculi (strain GB-M1) (Microsporidian parasite).